Reading from the N-terminus, the 329-residue chain is Beta-ketoacyl-[acyl-carrier-protein] synthase III (329 aa).

Active-site residues include C113 and H255. Residues 256–260 are ACP-binding; it reads QANQR. N285 is an active-site residue.

It belongs to the thiolase-like superfamily. FabH family. Homodimer.

It localises to the cytoplasm. It carries out the reaction malonyl-[ACP] + acetyl-CoA + H(+) = 3-oxobutanoyl-[ACP] + CO2 + CoA. It participates in lipid metabolism; fatty acid biosynthesis. Its function is as follows. Catalyzes the condensation reaction of fatty acid synthesis by the addition to an acyl acceptor of two carbons from malonyl-ACP. Catalyzes the first condensation reaction which initiates fatty acid synthesis and may therefore play a role in governing the total rate of fatty acid production. Possesses both acetoacetyl-ACP synthase and acetyl transacylase activities. Its substrate specificity determines the biosynthesis of branched-chain and/or straight-chain of fatty acids. The polypeptide is Beta-ketoacyl-[acyl-carrier-protein] synthase III (Chlorobium phaeovibrioides (strain DSM 265 / 1930) (Prosthecochloris vibrioformis (strain DSM 265))).